The chain runs to 462 residues: Prenyltransferase phqI (462 aa).

A brevianamide F-binding site is contributed by E101. Dimethylallyl diphosphate-binding residues include R117, K204, Y206, K273, Y275, Y357, Y442, and Y446.

The protein belongs to the tryptophan dimethylallyltransferase family.

It participates in alkaloid biosynthesis. In terms of biological role, prenyltransferase; part of the gene cluster that mediates the biosynthesis of paraherquamide, a fungal indole alkaloid that belongs to a family of natural products containing a characteristic bicyclo[2.2.2]diazaoctane core. The first steps in the biosynthesis of paraherquamide is the production of the beta-methyl-proline precursor from L-isoleucine. They require oxidation of a terminally hydroxylated L-isoleucine to the corresponding aldehyde by enzymes which have still to be identified. Spontaneous cyclization and dehydration would yield the 4-methyl pyrolline-5-carboxylic acid, which is then reduced by the pyrroline-5-carboxylate reductase phqD leading to the beta-methyl-proline precursor. The next step of paraherquamide biosynthesis involves coupling of beta-methyl-proline and L-tryptophan by the bimodular NRPS phqB, to produce a monooxopiperazine intermediate. The reductase (R) domain of phqB utilizes NADPH for hydride transfer to reduce the thioester bond of the T domain-tethered linear dipeptide to a hemithioaminal intermediate, which spontaneously cleaves the C-S bond to release the aldehyde product. This compound undergoes spontaneous cyclization and dehydration to give a dienamine which is reverse prenylated at C-2 by the reverse prenyltransferase phqJ. The other prenyltransferase present in the cluster, phqI may be a redundant gene in the pathway. During biosynthetic assembly, the key step to produce the polycyclic core is catalyzed by the bifunctional reductase and intramolecular [4+2] Diels-Alderase, phqE, resulting in formation of the [2.2.2] diazaoctane intermediate preparaherquamide. Following formation of preparaherquamide, an indole 2,3-epoxidation-initiated pinacol-like rearrangement is catalyzed by the phqK FAD-dependent monooxygenase. The prenyltransferase phqA, the cytochrome P450 monooxygenase phqL, and the FAD-linked oxidoreductase phqH (or the cytochrome P450 monooxygenase phqM), are proposed to be involved in the formation of the pyran ring. The FAD-dependent monooxygenase phqK is likely responsible for generation of the spiro-oxindole, and the N-methylation is likely mediated by the phqN methyltransferase leading to the isolable natural product paraherquamide F. However, the order of these biosynthetic steps has still to be determined. In late-stage paraherquamide biosynthesis, the third P450 monooxygenase, phqO, is probably responsible for the C-14 hydroxylation, transforming paraherquamide F to paraherquamide G, and paraherquamide E to the final product paraherquamide A. The expansion from the 6-membered ring pyran (in paraherquamides F and G) to the 7-membered dioxepin ring (in paraherquamides A and E) represents a poorly understood but intriguing process that probably involves the 2-oxoglutarate-dependent dioxygenase phqC. Finally, the remaining members of the paraherquamide cluster, including phqI as well as phqM (or phqH), do not have a clearly prescribed role and appear to be redundant. In Penicillium fellutanum, this protein is Prenyltransferase phqI.